We begin with the raw amino-acid sequence, 156 residues long: MPRKGPVPKREVLPDPIYSSRLITKFVNRLMYDGKKGAAEKIFYSSLEHLAEKTGEEPMRAFEKALDNVKPHMEVKARRVGGATYQVPMEVRPERQVSLSIRWLINYARSRGEKGMTAKLSAELLDAFNGRGGAVKKREDTHRMADANKAFSHYRW.

Belongs to the universal ribosomal protein uS7 family. In terms of assembly, part of the 30S ribosomal subunit. Contacts proteins S9 and S11.

One of the primary rRNA binding proteins, it binds directly to 16S rRNA where it nucleates assembly of the head domain of the 30S subunit. Is located at the subunit interface close to the decoding center, probably blocks exit of the E-site tRNA. The sequence is that of Small ribosomal subunit protein uS7 from Desulfovibrio desulfuricans (strain ATCC 27774 / DSM 6949 / MB).